Reading from the N-terminus, the 347-residue chain is DNA-directed RNA polymerase subunit alpha (347 aa).

The interval 1–226 is alpha N-terminal domain (alpha-NTD); sequence MLISQRPTLS…ELFGLARELN (226 aa). The interval 241-347 is alpha C-terminal domain (alpha-CTD); sequence ADHIASFALP…DQDYAETEQL (107 aa).

This sequence belongs to the RNA polymerase alpha chain family. In terms of assembly, homodimer. The RNAP catalytic core consists of 2 alpha, 1 beta, 1 beta' and 1 omega subunit. When a sigma factor is associated with the core the holoenzyme is formed, which can initiate transcription.

It catalyses the reaction RNA(n) + a ribonucleoside 5'-triphosphate = RNA(n+1) + diphosphate. In terms of biological role, DNA-dependent RNA polymerase catalyzes the transcription of DNA into RNA using the four ribonucleoside triphosphates as substrates. The sequence is that of DNA-directed RNA polymerase subunit alpha from Mycobacterium ulcerans (strain Agy99).